Reading from the N-terminus, the 141-residue chain is MMNKRKRVEELGETKHRQVRQRILQEHKNDILENLAFELSDKVRRLRSNASLLASTIRMRGEMRIAAIPRAQRNMHLRDLKNHLSCNVSATPWRTKIKEFYNLDELSSQKSARQPTKTVASSSSSSSKSTTVSKSSSKSQV.

The segment covering 106–115 (LSSQKSARQP) has biased composition (polar residues). Residues 106 to 141 (LSSQKSARQPTKTVASSSSSSSKSTTVSKSSSKSQV) are disordered. Over residues 116 to 141 (TKTVASSSSSSSKSTTVSKSSSKSQV) the composition is skewed to low complexity.

The protein localises to the nucleus. In terms of biological role, has a role in meiosis. This Schizosaccharomyces pombe (strain 972 / ATCC 24843) (Fission yeast) protein is Meiotically up-regulated gene 118 protein (mug118).